A 1225-amino-acid chain; its full sequence is Cytosolic carboxypeptidase 1 (1225 aa).

A compositionally biased stretch (acidic residues) spans Asp-366–Asp-392. Residues Asp-366–Asp-398 are disordered. Residues Tyr-842–Lys-1132 form the Peptidase M14 domain. Zn(2+)-binding residues include His-914, Glu-917, and His-1011. Glu-1096 functions as the Proton donor/acceptor in the catalytic mechanism. The segment covering Tyr-1181–Leu-1193 has biased composition (acidic residues). The tract at residues Tyr-1181–Thr-1225 is disordered.

This sequence belongs to the peptidase M14 family. Zn(2+) is required as a cofactor.

It is found in the cytoplasm. The protein localises to the cytosol. The protein resides in the nucleus. It localises to the mitochondrion. The catalysed reaction is (L-glutamyl)(n+1)-gamma-L-glutamyl-L-glutamyl-[protein] + H2O = (L-glutamyl)(n)-gamma-L-glutamyl-L-glutamyl-[protein] + L-glutamate. It carries out the reaction C-terminal L-alpha-aminoacyl-L-glutamyl-L-glutamyl-[tubulin] + H2O = C-terminal L-alpha-aminoacyl-L-glutamyl-[tubulin] + L-glutamate. Its function is as follows. Metallocarboxypeptidase that mediates protein deglutamylation of tubulin and non-tubulin target proteins. Catalyzes the removal of polyglutamate side chains present on the gamma-carboxyl group of glutamate residues within the C-terminal tail of alpha- and beta-tubulin. Specifically cleaves tubulin long-side-chains, while it is not able to remove the branching point glutamate. Also catalyzes the removal of polyglutamate residues from the carboxy-terminus of alpha-tubulin as well as non-tubulin proteins. In Xenopus laevis (African clawed frog), this protein is Cytosolic carboxypeptidase 1 (agtpbp1).